Consider the following 408-residue polypeptide: F-box A protein 155 (408 aa).

Positions 1–22 are disordered; that stretch reads MSDRGSDQSSSSSDSAQHIPPK.

Belongs to the FTH family.

This chain is F-box A protein 155 (fbxa-155), found in Caenorhabditis elegans.